Here is a 242-residue protein sequence, read N- to C-terminus: Biosynthetic peptidoglycan transglycosylase (242 aa).

Residues 12-31 traverse the membrane as a helical segment; the sequence is LLFWLMLASALLVLALRWLP.

Belongs to the glycosyltransferase 51 family.

Its subcellular location is the cell inner membrane. It catalyses the reaction [GlcNAc-(1-&gt;4)-Mur2Ac(oyl-L-Ala-gamma-D-Glu-L-Lys-D-Ala-D-Ala)](n)-di-trans,octa-cis-undecaprenyl diphosphate + beta-D-GlcNAc-(1-&gt;4)-Mur2Ac(oyl-L-Ala-gamma-D-Glu-L-Lys-D-Ala-D-Ala)-di-trans,octa-cis-undecaprenyl diphosphate = [GlcNAc-(1-&gt;4)-Mur2Ac(oyl-L-Ala-gamma-D-Glu-L-Lys-D-Ala-D-Ala)](n+1)-di-trans,octa-cis-undecaprenyl diphosphate + di-trans,octa-cis-undecaprenyl diphosphate + H(+). Its pathway is cell wall biogenesis; peptidoglycan biosynthesis. Its function is as follows. Peptidoglycan polymerase that catalyzes glycan chain elongation from lipid-linked precursors. The sequence is that of Biosynthetic peptidoglycan transglycosylase from Ectopseudomonas mendocina (strain ymp) (Pseudomonas mendocina).